Reading from the N-terminus, the 489-residue chain is Betaine aldehyde dehydrogenase (489 aa).

Residues Thr26 and Asp93 each contribute to the K(+) site. 150–152 (GAW) contributes to the NAD(+) binding site. Lys162 functions as the Charge relay system in the catalytic mechanism. Residue 176–179 (KPSE) participates in NAD(+) binding. Val180 provides a ligand contact to K(+). 229-232 (GVET) is an NAD(+) binding site. Leu245 lines the K(+) pocket. Catalysis depends on Glu251, which acts as the Proton acceptor. Residues Gly253, Cys285, and Glu386 each coordinate NAD(+). The Nucleophile role is filled by Cys285. Cys285 carries the cysteine sulfenic acid (-SOH) modification. Positions 456 and 459 each coordinate K(+). Glu463 acts as the Charge relay system in catalysis.

It belongs to the aldehyde dehydrogenase family. As to quaternary structure, dimer of dimers. It depends on K(+) as a cofactor.

It carries out the reaction betaine aldehyde + NAD(+) + H2O = glycine betaine + NADH + 2 H(+). Its pathway is amine and polyamine biosynthesis; betaine biosynthesis via choline pathway; betaine from betaine aldehyde: step 1/1. Functionally, involved in the biosynthesis of the osmoprotectant glycine betaine. Catalyzes the irreversible oxidation of betaine aldehyde to the corresponding acid. In Burkholderia lata (strain ATCC 17760 / DSM 23089 / LMG 22485 / NCIMB 9086 / R18194 / 383), this protein is Betaine aldehyde dehydrogenase.